We begin with the raw amino-acid sequence, 154 residues long: 17 kDa surface antigen (154 aa).

The N-terminal stretch at 1 to 19 (MKLLSKIMIIALAASTLQA) is a signal peptide. Cys20 is lipidated: N-palmitoyl cysteine. The S-diacylglycerol cysteine moiety is linked to residue Cys20.

The protein belongs to the rickettsiale 17 kDa surface antigen family.

The protein localises to the cell outer membrane. In Rickettsia amblyommatis (Rickettsia amblyommii), this protein is 17 kDa surface antigen (omp).